A 936-amino-acid polypeptide reads, in one-letter code: Protein NNF2 (936 aa).

Residues 1–41 (MEEQFTNQKKVSHLQSLMNTKRSEQPTEFAKKHRFKDTLAL) lie on the Lumenal side of the membrane. A Glycyl lysine isopeptide (Lys-Gly) (interchain with G-Cter in ubiquitin) cross-link involves residue K10. The chain crosses the membrane as a helical span at residues 42-62 (FLVFLSFNHFTSLCLLVSFIV). Topologically, residues 63 to 120 (ATKCKDFLANCFIILFLSKKPSRHIGEVAHIDISTSKVTNGSSNRKSNSRFFGNSKNS) are cytoplasmic. A helical transmembrane segment spans residues 121–141 (FVIPIPVLICEILFAMLLKIY). Over 142 to 245 (GGDYFVKPIK…FKMLGKHSDS (104 aa)) the chain is Lumenal. The chain crosses the membrane as a helical span at residues 246 to 266 (MIYYLSFHILFFSFASSLLHP). Residues 267-936 (HRQTAENKPL…NIHSLIGNSY (670 aa)) are Cytoplasmic-facing. Disordered regions lie at residues 297–351 (RISS…SNIL), 387–437 (GSNS…DFFS), and 512–533 (TSEN…QEKH). Residues 299 to 308 (SSSSSVSADS) show a composition bias toward low complexity. Polar residues predominate over residues 325-351 (LSSSNQTIHPSQQNNSPVPLSSHSNIL). Composition is skewed to low complexity over residues 394-405 (TTTTSTTTSPTT) and 414-428 (SLSN…SNGN). A compositionally biased stretch (polar residues) spans 512-529 (TSENSLTPTNSNTSYVSN).

It is found in the endoplasmic reticulum membrane. The polypeptide is Protein NNF2 (NNF2) (Saccharomyces cerevisiae (strain ATCC 204508 / S288c) (Baker's yeast)).